A 358-amino-acid chain; its full sequence is Peptide chain release factor 1 (358 aa).

Residue Gln-234 is modified to N5-methylglutamine.

It belongs to the prokaryotic/mitochondrial release factor family. Methylated by PrmC. Methylation increases the termination efficiency of RF1.

The protein localises to the cytoplasm. Functionally, peptide chain release factor 1 directs the termination of translation in response to the peptide chain termination codons UAG and UAA. The protein is Peptide chain release factor 1 of Chloroherpeton thalassium (strain ATCC 35110 / GB-78).